The following is an 802-amino-acid chain: DNA mismatch repair protein MutS (802 aa).

G617–S624 is an ATP binding site.

The protein belongs to the DNA mismatch repair MutS family.

In terms of biological role, this protein is involved in the repair of mismatches in DNA. It is possible that it carries out the mismatch recognition step. This protein has a weak ATPase activity. The chain is DNA mismatch repair protein MutS from Buchnera aphidicola subsp. Acyrthosiphon pisum (strain Tuc7).